The sequence spans 239 residues: Ribonuclease HII (239 aa).

The region spanning 18–231 (KIIVGLDEAG…SKNLLKEIEE (214 aa)) is the RNase H type-2 domain. Asp-24, Glu-25, and Asp-125 together coordinate a divalent metal cation.

Belongs to the RNase HII family. Requires Mn(2+) as cofactor. Mg(2+) is required as a cofactor.

The protein resides in the cytoplasm. The enzyme catalyses Endonucleolytic cleavage to 5'-phosphomonoester.. Endonuclease that specifically degrades the RNA of RNA-DNA hybrids. This chain is Ribonuclease HII, found in Methanococcus maripaludis (strain C7 / ATCC BAA-1331).